Here is a 249-residue protein sequence, read N- to C-terminus: Enolase-phosphatase E1 (249 aa).

Residues aspartate 14 and glutamate 16 each contribute to the Mg(2+) site. Residues 141-142 (SS) and lysine 175 each bind substrate. Aspartate 200 contacts Mg(2+).

The protein belongs to the HAD-like hydrolase superfamily. MasA/MtnC family. As to quaternary structure, monomer. It depends on Mg(2+) as a cofactor.

It is found in the cytoplasm. The protein resides in the nucleus. The enzyme catalyses 5-methylsulfanyl-2,3-dioxopentyl phosphate + H2O = 1,2-dihydroxy-5-(methylsulfanyl)pent-1-en-3-one + phosphate. The protein operates within amino-acid biosynthesis; L-methionine biosynthesis via salvage pathway; L-methionine from S-methyl-5-thio-alpha-D-ribose 1-phosphate: step 3/6. It functions in the pathway amino-acid biosynthesis; L-methionine biosynthesis via salvage pathway; L-methionine from S-methyl-5-thio-alpha-D-ribose 1-phosphate: step 4/6. Bifunctional enzyme that catalyzes the enolization of 2,3-diketo-5-methylthiopentyl-1-phosphate (DK-MTP-1-P) into the intermediate 2-hydroxy-3-keto-5-methylthiopentenyl-1-phosphate (HK-MTPenyl-1-P), which is then dephosphorylated to form the acireductone 1,2-dihydroxy-3-keto-5-methylthiopentene (DHK-MTPene). The protein is Enolase-phosphatase E1 of Drosophila mojavensis (Fruit fly).